The following is a 618-amino-acid chain: Glutamine--fructose-6-phosphate aminotransferase [isomerizing] (618 aa).

The active-site Nucleophile; for GATase activity is the Cys-2. One can recognise a Glutamine amidotransferase type-2 domain in the interval 2 to 226 (CGIVGYAGRN…DFETAVLTPD (225 aa)). The interval 72-91 (WATHGRPSTENAHPHNSGGN) is disordered. SIS domains follow at residues 295–434 (NDDE…VRGK) and 467–608 (CAEN…IDKP). The For Fru-6P isomerization activity role is filled by Lys-613.

Homodimer.

The protein resides in the cytoplasm. The catalysed reaction is D-fructose 6-phosphate + L-glutamine = D-glucosamine 6-phosphate + L-glutamate. Its function is as follows. Catalyzes the first step in hexosamine metabolism, converting fructose-6P into glucosamine-6P using glutamine as a nitrogen source. This is Glutamine--fructose-6-phosphate aminotransferase [isomerizing] from Methanosarcina mazei (strain ATCC BAA-159 / DSM 3647 / Goe1 / Go1 / JCM 11833 / OCM 88) (Methanosarcina frisia).